Here is a 165-residue protein sequence, read N- to C-terminus: Ubiquitin-conjugating enzyme E2 G2 (165 aa).

Ala2 is subject to N-acetylalanine. The region spanning 4–164 (TALKRLMAEY…AKQIVQKSLG (161 aa)) is the UBC core domain. The Glycyl thioester intermediate role is filled by Cys89.

The protein belongs to the ubiquitin-conjugating enzyme family. As to quaternary structure, interacts with AUP1 (via C-terminus); the interaction recruits UBE2G2 to lipid droplets. Interacts with ubiquitin ligases AMFR/gp78 and RNF139/TRC8; recruitment to lipid droplets by AUP1 facilitates interaction of UBE2G2 with AMFR and RNF139, leading to sterol-induced ubiquitination of 3-hydroxy-3-methylglutaryl coenzyme A reductase and its subsequent proteasomal degradation.

Its subcellular location is the endoplasmic reticulum. It localises to the lipid droplet. The catalysed reaction is S-ubiquitinyl-[E1 ubiquitin-activating enzyme]-L-cysteine + [E2 ubiquitin-conjugating enzyme]-L-cysteine = [E1 ubiquitin-activating enzyme]-L-cysteine + S-ubiquitinyl-[E2 ubiquitin-conjugating enzyme]-L-cysteine.. Its pathway is protein modification; protein ubiquitination. In terms of biological role, accepts ubiquitin from the E1 complex and catalyzes its covalent attachment to other proteins. In vitro catalyzes 'Lys-48'-linked polyubiquitination. Involved in endoplasmic reticulum-associated degradation (ERAD). Required for sterol-induced ubiquitination of 3-hydroxy-3-methylglutaryl coenzyme A reductase and its subsequent proteasomal degradation. The sequence is that of Ubiquitin-conjugating enzyme E2 G2 from Homo sapiens (Human).